Reading from the N-terminus, the 476-residue chain is WD repeat, SAM and U-box domain-containing protein 1 (476 aa).

WD repeat units lie at residues 10 to 47 (DHSD…ELPY), 52 to 91 (GHTY…MLAV), 95 to 134 (PTGS…FYRS), 137 to 176 (VKDG…LCNE), 178 to 227 (AHDL…FLGG), 237 to 276 (GHSA…ILHT), and 279 to 318 (QHTR…PCAG). In terms of domain architecture, SAM spans 333–396 (WSEDDVSAWL…LQKIEELRMK (64 aa)). Positions 403–476 (AVPDEFLCPI…ISRWLETQQK (74 aa)) constitute a U-box domain.

The sequence is that of WD repeat, SAM and U-box domain-containing protein 1 (WDSUB1) from Gallus gallus (Chicken).